The sequence spans 259 residues: Trans-aconitate 2-methyltransferase (259 aa).

The protein belongs to the methyltransferase superfamily. Tam family.

The protein localises to the cytoplasm. It carries out the reaction trans-aconitate + S-adenosyl-L-methionine = (E)-3-(methoxycarbonyl)pent-2-enedioate + S-adenosyl-L-homocysteine. In terms of biological role, catalyzes the S-adenosylmethionine monomethyl esterification of trans-aconitate. The sequence is that of Trans-aconitate 2-methyltransferase from Variovorax paradoxus (strain S110).